A 1050-amino-acid chain; its full sequence is MVKLSIVLTPQFLSHDQGQLTKELQQHVKSVTCPCEYLRKVINTLADHHHRGTDFGGSPWLHVIIAFPTSYKVVITLWIVYLWVSLLKTIFWSRNGHDGSTDVQQRAWRSNRRRQEGLRSICMHTKKRVSSFRGNKIGLKDVITLRRHVETKVRAKIRKRKVTTKINHHDKINGKRKTARKQKMFQRAQELRRRAEDYHKCKIPPSARKALCNWVRMAAAEHRHSSGLPYWPYLTAETLKNRMGHQPPPPTQQHSITDNSLSLKTPPECLLTPLPPSADDNLKTPPECVLTPLPPSADDNLKTPPECVLTPLPPSADDNLKTPPECLLTPLPPSADDNLKTPPECLLTPLPPSALPSAPPSADDNLKTRAECLLHPLPPSADDNLKTPSERQLTPLPPSAPPSADDNIKTPAERLRGPLPPSADDNLKTPSERQLTPLPPSAPPSADDNIKTPAERLRGPLPPSADDNLKTPSERQLTPLPPSAPPSADDNIKTPAERLRGPLPPSADDNLKTPSERQLTALPPSADDNIKTPAERLRGPLPPSADDNLKTPSERQLTPLPPSAPPSADDNIKTPAFHPQRMIISRHLPSVSSLPFHPQLHPQQMIISRHLPSVCGGRFHPQQMIISRHLPSVSSLPFHPQLHPQQMIISRHLPSVCGGRFHPQRMIISRHLPSVSSLPFHPQLHPQQMIISRHLPSVCGGRFHPQQMIISRHLPSVSSLPFHPQLHPQQMIISRHLPSVCGGRFHPQRMIISRHLPSVSSLPFHPQLHPQQMIISRHLPSVCGERLRGPLPPSADDNLKTPSERQLTPLPPSAPPSADDNIKTPAERLRGPLPPSADDNLKTPSERQLTPLPPSAPPSADDNIKTPAERLRGPLPPSADDNLKTPSERQLTPLPPSAPPSADDNIKTPAERLRGPLPPSADDNLKTPPLATQEAEAEKPRKPKRQRAAEMEPPPEPKRRRVGDVEPSRKPKRRRAADVEPSSPEPKRRRVGDVEPSRKPKRRRAADVEPSSPEPKRRRVGDVEPSRKPKRRRAADVEPSLPEPKRRRLS.

Residues 63–87 (VIIAFPTSYKVVITLWIVYLWVSLL) traverse the membrane as a helical segment. Disordered regions lie at residues 241-262 (NRMG…NSLS), 290-574 (LTPL…NIKT), and 785-1050 (ERLR…RRLS). A compositionally biased stretch (polar residues) spans 252–262 (QQHSITDNSLS). Residues 349–359 (PLPPSALPSAP) show a composition bias toward pro residues. Composition is skewed to basic and acidic residues over residues 406–416 (DNIKTPAERLR), 448–458 (DNIKTPAERLR), 490–500 (DNIKTPAERLR), 528–538 (DNIKTPAERLR), 820–830 (DNIKTPAERLR), 862–872 (DNIKTPAERLR), and 904–914 (DNIKTPAERLR).

This sequence belongs to the NPIP family.

It is found in the membrane. The chain is Nuclear pore complex-interacting protein family member B3 (NPIPB3) from Homo sapiens (Human).